The following is an 82-amino-acid chain: Mu-conotoxin MrVIB (82 aa).

Positions Met1 to Ala22 are cleaved as a signal peptide. Positions Asp23–Glu49 are excised as a propeptide. 3 disulfide bridges follow: Cys53-Cys71, Cys60-Cys76, and Cys70-Cys81.

It belongs to the conotoxin O1 superfamily. As to expression, expressed by the venom duct.

It is found in the secreted. Functionally, muO-conotoxins are gating-modifier toxins that inhibit sodium current by trapping the domain II voltage sensor in the closed position to prevent opening of the sodium channel. This toxin has a preference for Nav1.4/SCN4A over Nav1.2/SCN2A sodium channels. It blocks Nav channels by interacting mainly with the C-terminal part of the pore loop of domain-3. It also blocks fast-inactivating calcium current. Blocks Nav1.8/SCN10A sodium channels and has potent and long-lasting local anesthetic effects. It can also block propagation of action potentials in A- and C-fibers in sciatic nerve as well as skeletal muscle in isolated preparations. This is Mu-conotoxin MrVIB from Conus marmoreus (Marble cone).